A 455-amino-acid chain; its full sequence is Bifunctional protein GlmU (455 aa).

The tract at residues M1–K225 is pyrophosphorylase. Residues L6–G9, K20, Q71, G76–T77, Y98–D100, G135, E150, N165, and N223 contribute to the UDP-N-acetyl-alpha-D-glucosamine site. D100 is a binding site for Mg(2+). N223 provides a ligand contact to Mg(2+). Residues A226–D246 are linker. An N-acetyltransferase region spans residues G247–E455. UDP-N-acetyl-alpha-D-glucosamine contacts are provided by R329 and K347. The active-site Proton acceptor is the H359. Positions 362 and 373 each coordinate UDP-N-acetyl-alpha-D-glucosamine. Residues A376, N382–Y383, S401, A419, and R436 each bind acetyl-CoA.

The protein in the N-terminal section; belongs to the N-acetylglucosamine-1-phosphate uridyltransferase family. In the C-terminal section; belongs to the transferase hexapeptide repeat family. Homotrimer. Mg(2+) serves as cofactor.

Its subcellular location is the cytoplasm. The enzyme catalyses alpha-D-glucosamine 1-phosphate + acetyl-CoA = N-acetyl-alpha-D-glucosamine 1-phosphate + CoA + H(+). It catalyses the reaction N-acetyl-alpha-D-glucosamine 1-phosphate + UTP + H(+) = UDP-N-acetyl-alpha-D-glucosamine + diphosphate. The protein operates within nucleotide-sugar biosynthesis; UDP-N-acetyl-alpha-D-glucosamine biosynthesis; N-acetyl-alpha-D-glucosamine 1-phosphate from alpha-D-glucosamine 6-phosphate (route II): step 2/2. It functions in the pathway nucleotide-sugar biosynthesis; UDP-N-acetyl-alpha-D-glucosamine biosynthesis; UDP-N-acetyl-alpha-D-glucosamine from N-acetyl-alpha-D-glucosamine 1-phosphate: step 1/1. Its pathway is bacterial outer membrane biogenesis; LPS lipid A biosynthesis. Catalyzes the last two sequential reactions in the de novo biosynthetic pathway for UDP-N-acetylglucosamine (UDP-GlcNAc). The C-terminal domain catalyzes the transfer of acetyl group from acetyl coenzyme A to glucosamine-1-phosphate (GlcN-1-P) to produce N-acetylglucosamine-1-phosphate (GlcNAc-1-P), which is converted into UDP-GlcNAc by the transfer of uridine 5-monophosphate (from uridine 5-triphosphate), a reaction catalyzed by the N-terminal domain. The sequence is that of Bifunctional protein GlmU from Aromatoleum aromaticum (strain DSM 19018 / LMG 30748 / EbN1) (Azoarcus sp. (strain EbN1)).